We begin with the raw amino-acid sequence, 404 residues long: Cysteine desulfurase IscS (404 aa).

Residues 75-76, N155, Q183, and 203-205 contribute to the pyridoxal 5'-phosphate site; these read AT and SAH. K206 carries the post-translational modification N6-(pyridoxal phosphate)lysine. T243 provides a ligand contact to pyridoxal 5'-phosphate. C328 functions as the Cysteine persulfide intermediate in the catalytic mechanism. Residue C328 participates in [2Fe-2S] cluster binding.

The protein belongs to the class-V pyridoxal-phosphate-dependent aminotransferase family. NifS/IscS subfamily. In terms of assembly, homodimer. Forms a heterotetramer with IscU, interacts with other sulfur acceptors. Pyridoxal 5'-phosphate serves as cofactor.

Its subcellular location is the cytoplasm. The catalysed reaction is (sulfur carrier)-H + L-cysteine = (sulfur carrier)-SH + L-alanine. It functions in the pathway cofactor biosynthesis; iron-sulfur cluster biosynthesis. Functionally, master enzyme that delivers sulfur to a number of partners involved in Fe-S cluster assembly, tRNA modification or cofactor biosynthesis. Catalyzes the removal of elemental sulfur atoms from cysteine to produce alanine. Functions as a sulfur delivery protein for Fe-S cluster synthesis onto IscU, an Fe-S scaffold assembly protein, as well as other S acceptor proteins. The protein is Cysteine desulfurase IscS of Pseudomonas aeruginosa (strain UCBPP-PA14).